A 241-amino-acid chain; its full sequence is ATP synthase subunit a (241 aa).

The next 5 helical transmembrane spans lie at 30-50 (GQVFLSSWILIGILLAFVLVG), 89-109 (LPFIGTLFLFIFVSNWGGALI), 128-148 (INTTVAMALLVSLAYFYAGLS), 193-213 (LAVGVLVYLVPLIVPLPVMLL), and 214-234 (GLFTSAIQALIFATLAAFYIG).

The protein belongs to the ATPase A chain family. As to quaternary structure, F-type ATPases have 2 components, CF(1) - the catalytic core - and CF(0) - the membrane proton channel. CF(1) has five subunits: alpha(3), beta(3), gamma(1), delta(1), epsilon(1). CF(0) has four main subunits: a, b, b' and c.

Its subcellular location is the cellular thylakoid membrane. Functionally, key component of the proton channel; it plays a direct role in the translocation of protons across the membrane. The polypeptide is ATP synthase subunit a (Synechococcus sp. (strain CC9902)).